A 129-amino-acid polypeptide reads, in one-letter code: Protein Turandot A1/2 (129 aa).

An N-terminal signal peptide occupies residues 1–21 (MNSSTALMCFALLLISPLCLG). N49 carries an N-linked (GlcNAc...) asparagine glycan.

It belongs to the Turandot family.

It localises to the secreted. Functionally, a humoral factor that plays a role in stress tolerance; gives increased resistance to the lethal effects of bacterial challenge and stress. Regulated by the JAK/STAT pathway and NF-KB-like Relish pathway in the fat body, upd3 in the hemocytes and Mekk1 in response to septic injury and consequent immune response. The protein is Protein Turandot A1/2 (TotA1) of Drosophila sechellia (Fruit fly).